We begin with the raw amino-acid sequence, 330 residues long: Beta-ketoacyl-[acyl-carrier-protein] synthase III (330 aa).

Active-site residues include Cys115 and His255. The interval 256 to 260 (QANFR) is ACP-binding. Asn285 is a catalytic residue.

It belongs to the thiolase-like superfamily. FabH family. In terms of assembly, homodimer.

It is found in the cytoplasm. The enzyme catalyses malonyl-[ACP] + acetyl-CoA + H(+) = 3-oxobutanoyl-[ACP] + CO2 + CoA. Its pathway is lipid metabolism; fatty acid biosynthesis. Functionally, catalyzes the condensation reaction of fatty acid synthesis by the addition to an acyl acceptor of two carbons from malonyl-ACP. Catalyzes the first condensation reaction which initiates fatty acid synthesis and may therefore play a role in governing the total rate of fatty acid production. Possesses both acetoacetyl-ACP synthase and acetyl transacylase activities. Its substrate specificity determines the biosynthesis of branched-chain and/or straight-chain of fatty acids. The polypeptide is Beta-ketoacyl-[acyl-carrier-protein] synthase III (Helicobacter pylori (strain HPAG1)).